Reading from the N-terminus, the 246-residue chain is Eukaryotic translation initiation factor 6 (246 aa).

It belongs to the eIF-6 family. Monomer. Associates with the 60S ribosomal subunit.

The protein localises to the cytoplasm. It localises to the nucleus. It is found in the nucleolus. In terms of biological role, binds to the 60S ribosomal subunit and prevents its association with the 40S ribosomal subunit to form the 80S initiation complex in the cytoplasm. May also be involved in ribosome biogenesis. Involved in miRNA-mediated gene silencing. The sequence is that of Eukaryotic translation initiation factor 6 from Caenorhabditis elegans.